The following is a 147-amino-acid chain: Hemoglobin subunit beta (147 aa).

The residue at position 2 (Val-2) is an N-acetylvaline. In terms of domain architecture, Globin spans 3 to 147 (HLTGEEKGIV…VATALAHKYH (145 aa)). Thr-13 is subject to Phosphothreonine. Ser-45 carries the phosphoserine modification. Lys-60 carries the N6-acetyllysine modification. His-64 contacts heme b. Lys-83 is modified (N6-acetyllysine). Position 93 (His-93) interacts with heme b. Position 94 is an S-nitrosocysteine (Cys-94). Position 145 is an N6-acetyllysine (Lys-145).

The protein belongs to the globin family. In terms of assembly, heterotetramer of two alpha chains and two beta chains. In terms of tissue distribution, red blood cells.

In terms of biological role, involved in oxygen transport from the lung to the various peripheral tissues. In Rhinolophus ferrumequinum (Greater horseshoe bat), this protein is Hemoglobin subunit beta (HBB).